The sequence spans 184 residues: GMP synthase [glutamine-hydrolyzing] subunit A (184 aa).

A Glutamine amidotransferase type-1 domain is found at 3-184 (RIVVVDNHGQ…ENFRDICAGD (182 aa)). The Nucleophile role is filled by Cys-73. Catalysis depends on residues His-161 and Glu-163.

In terms of assembly, heterodimer composed of a glutamine amidotransferase subunit (A) and a GMP-binding subunit (B).

The catalysed reaction is XMP + L-glutamine + ATP + H2O = GMP + L-glutamate + AMP + diphosphate + 2 H(+). The protein operates within purine metabolism; GMP biosynthesis; GMP from XMP (L-Gln route): step 1/1. Functionally, catalyzes the synthesis of GMP from XMP. This chain is GMP synthase [glutamine-hydrolyzing] subunit A, found in Natronomonas pharaonis (strain ATCC 35678 / DSM 2160 / CIP 103997 / JCM 8858 / NBRC 14720 / NCIMB 2260 / Gabara) (Halobacterium pharaonis).